The primary structure comprises 201 residues: Nucleoid occlusion factor SlmA (201 aa).

The HTH tetR-type domain maps to 14–75 (KERQQQVLEV…ALIERIEMTL (62 aa)). Positions 38–57 (TTERLSKAVGVSEGALYRYF) form a DNA-binding region, H-T-H motif.

This sequence belongs to the nucleoid occlusion factor SlmA family. Homodimer. Interacts with FtsZ.

Its subcellular location is the cytoplasm. The protein resides in the nucleoid. Required for nucleoid occlusion (NO) phenomenon, which prevents Z-ring formation and cell division over the nucleoid. Acts as a DNA-associated cell division inhibitor that binds simultaneously chromosomal DNA and FtsZ, and disrupts the assembly of FtsZ polymers. SlmA-DNA-binding sequences (SBS) are dispersed on non-Ter regions of the chromosome, preventing FtsZ polymerization at these regions. The chain is Nucleoid occlusion factor SlmA from Glaesserella parasuis serovar 5 (strain SH0165) (Haemophilus parasuis).